Consider the following 975-residue polypeptide: Monofunctional C1-tetrahydrofolate synthase, mitochondrial (975 aa).

The N-terminal 30 residues, 1 to 30 (MSARLPFVLRRLARPQHPGSPRRLPSLCRA), are a transit peptide targeting the mitochondrion. Residues 13 to 45 (ARPQHPGSPRRLPSLCRASSGRGSGCGGGEGLL) form a disordered region. The tract at residues 31–345 (SSGRGSGCGG…REQQHRRWRL (315 aa)) is methylenetetrahydrofolate dehydrogenase and cyclohydrolase. Residues 34–44 (RGSGCGGGEGL) are compositionally biased toward gly residues. Lys187 carries the post-translational modification N6-acetyllysine; alternate. At Lys187 the chain carries N6-succinyllysine; alternate. The interval 346 to 975 (HCLKLQPLSP…TETEQVKGLF (630 aa)) is formyltetrahydrofolate synthetase. Ser354 is modified (phosphoserine). 420-427 (TPLGEGKS) contacts ATP. Residue Lys593 is modified to N6-succinyllysine.

The protein in the N-terminal section; belongs to the tetrahydrofolate dehydrogenase/cyclohydrolase family. In the C-terminal section; belongs to the formate--tetrahydrofolate ligase family. As to quaternary structure, homodimer.

The protein resides in the mitochondrion. The catalysed reaction is (6S)-5,6,7,8-tetrahydrofolate + formate + ATP = (6R)-10-formyltetrahydrofolate + ADP + phosphate. It participates in one-carbon metabolism; tetrahydrofolate interconversion. Its function is as follows. May provide the missing metabolic reaction required to link the mitochondria and the cytoplasm in the mammalian model of one-carbon folate metabolism complementing thus the enzymatic activities of MTHFD2. The sequence is that of Monofunctional C1-tetrahydrofolate synthase, mitochondrial (MTHFD1L) from Bos taurus (Bovine).